We begin with the raw amino-acid sequence, 374 residues long: uncharacterized protein (374 aa).

The stretch at 298–332 (TKEKLLKLHSEQKSLSEKINKLSGEKDIEQSMINN) forms a coiled coil.

This is an uncharacterized protein from Acanthamoeba polyphaga (Amoeba).